The following is a 375-amino-acid chain: Actin (375 aa).

This sequence belongs to the actin family.

Its subcellular location is the cytoplasm. It localises to the cytoskeleton. The enzyme catalyses ATP + H2O = ADP + phosphate + H(+). Functionally, actins are highly conserved proteins that are involved in various types of cell motility and are ubiquitously expressed in all eukaryotic cells. The protein is Actin of Giardia intestinalis (Giardia lamblia).